Reading from the N-terminus, the 549-residue chain is Thermosome subunit alpha (549 aa).

Residues 529 to 549 form a disordered region; the sequence is EGRQGAECPPNGCMGGMDMRM.

It belongs to the TCP-1 chaperonin family. As to quaternary structure, forms a Heterooligomeric complex of two stacked eight-membered rings.

Functionally, molecular chaperone; binds unfolded polypeptides in vitro, and has a weak ATPase activity. This is Thermosome subunit alpha (thsA) from Thermococcus sp. (strain KS-8).